Consider the following 518-residue polypeptide: Motile sperm domain-containing protein 2 (518 aa).

Residues 1 to 496 (MAENHAQNKA…QVQRCIWFQQ (496 aa)) are Cytoplasmic-facing. Residues 82 to 239 (ESSIPRWLLE…HMGGTDPFKY (158 aa)) form the CRAL-TRIO domain. The interval 252–308 (PLCENGPITSEDETSSKEDIESDGKETLETISNEEQTPLLKKINPTESTSKAEENEK) is disordered. A compositionally biased stretch (basic and acidic residues) spans 265–279 (TSSKEDIESDGKETL). The MSP domain maps to 327–445 (LLHISPAEEL…MEHRLRCHTV (119 aa)). The segment at 365–366 (RT) is required for FFAT motif binding and phosphorylated FFAT motif binding. Residues 497–518 (LLLSLTMLLLAFVTSFFYLLYS) traverse the membrane as a helical; Anchor for type IV membrane protein segment.

In terms of assembly, homooligomer. Interacts (via MSP domain) with STARD3NL (via FFAT motif), RMDN3 (via FFAT motif), OSBPL1A (via FFAT motif) and CERT1 (via FFAT motif). Interacts (via MSP domain) with STARD3 (via phosphorylated FFAT motif); this interaction depends on the critical phosphorylation of STARD3 on 'Ser-209'. Interacts with RB1CC1 (via phosphorylated FFAT motif), MIGA2 (via phosphorylated FFAT motif) and OSBPL1A (via FFAT motif). As to expression, highly expressed in CD14(+) monocytes, and at lower levels in neutrophils. Does not show significant expression in B-cells or T-cells.

The protein localises to the endoplasmic reticulum membrane. Endoplasmic reticulum-anchored protein that mediates the formation of contact sites between the endoplasmic (ER) and endosomes, mitochondria or Golgi through interaction with conventional- and phosphorylated-FFAT-containing organelle-bound proteins. In addition, forms endoplasmic reticulum (ER)-lipid droplets (LDs) contacts through a direct protein-membrane interaction and participates in LDs homeostasis. The attachment mechanism involves an amphipathic helix that has an affinity for lipid packing defects present at the surface of LDs. Promotes migration of primary monocytes and neutrophils, in response to various chemokines. The chain is Motile sperm domain-containing protein 2 from Homo sapiens (Human).